Here is a 179-residue protein sequence, read N- to C-terminus: MAKLTLQEQLLKAGLVTSKKAAKVERTAKKSRVQAREARAAVEENKKAQLERDKQLSEQQKQAALAKEYKAQVKQLIEMNRITIANGDIGFNFTDGNLIKKIFVDKLTQAQLINGRLAIARLLVDNNSEGEYAIIPASVADKIAQRDASSIVLHSALSAEEQDEDDPYADFKVPDDLMW.

The tract at residues 27 to 54 is disordered; that stretch reads TAKKSRVQAREARAAVEENKKAQLERDK.

This is an uncharacterized protein from Escherichia coli (strain K12).